Consider the following 193-residue polypeptide: MELKIKKAELEGIYVDINQLPVGNIPEIALAGRSNVGKSSLINKICNRKNLAKSSSTPGKTRTINYYLINDQWFMVDLPGYGYARVSREEKARWKKMVEAYLSQREQLRGVIQLLDIRHEPGENDILMKDWLLHLQIPVLVVATKADKLSRGARMKHIAIIRKTLDLPEMPLVFSAQSGDGVEELKAALAELL.

One can recognise an EngB-type G domain in the interval 24 to 193 (NIPEIALAGR…ELKAALAELL (170 aa)). GTP is bound by residues 32-39 (GRSNVGKS), 59-63 (GKTRT), 77-80 (DLPG), 144-147 (TKAD), and 174-176 (FSA). Residues serine 39 and threonine 61 each coordinate Mg(2+).

It belongs to the TRAFAC class TrmE-Era-EngA-EngB-Septin-like GTPase superfamily. EngB GTPase family. Mg(2+) is required as a cofactor.

Functionally, necessary for normal cell division and for the maintenance of normal septation. The chain is Probable GTP-binding protein EngB from Syntrophomonas wolfei subsp. wolfei (strain DSM 2245B / Goettingen).